The primary structure comprises 243 residues: GTP cyclohydrolase 1 type 2 (243 aa).

5 residues coordinate a divalent metal cation: His-63, His-64, Asp-102, His-209, and Glu-213.

Belongs to the GTP cyclohydrolase I type 2/NIF3 family. As to quaternary structure, homohexamer.

The enzyme catalyses GTP + H2O = 7,8-dihydroneopterin 3'-triphosphate + formate + H(+). It participates in cofactor biosynthesis; 7,8-dihydroneopterin triphosphate biosynthesis; 7,8-dihydroneopterin triphosphate from GTP: step 1/1. Functionally, converts GTP to dihydroneopterin triphosphate. Is not active with GDP, GMP, ATP, CTP or UTP as substrate. The chain is GTP cyclohydrolase 1 type 2 from Helicobacter pylori (strain ATCC 700392 / 26695) (Campylobacter pylori).